A 449-amino-acid polypeptide reads, in one-letter code: Phosphoglucosamine mutase (449 aa).

Residue S102 is the Phosphoserine intermediate of the active site. Positions 102, 243, 245, and 247 each coordinate Mg(2+). S102 is modified (phosphoserine).

The protein belongs to the phosphohexose mutase family. Mg(2+) serves as cofactor. In terms of processing, activated by phosphorylation.

The enzyme catalyses alpha-D-glucosamine 1-phosphate = D-glucosamine 6-phosphate. In terms of biological role, catalyzes the conversion of glucosamine-6-phosphate to glucosamine-1-phosphate. The polypeptide is Phosphoglucosamine mutase (Maricaulis maris (strain MCS10) (Caulobacter maris)).